Consider the following 270-residue polypeptide: Formamidopyrimidine-DNA glycosylase (270 aa).

The active-site Schiff-base intermediate with DNA is the Pro-2. The Proton donor role is filled by Glu-3. Lys-58 acts as the Proton donor; for beta-elimination activity in catalysis. DNA-binding residues include His-91, Arg-110, and Arg-151. The segment at 236 to 270 adopts an FPG-type zinc-finger fold; the sequence is FVYGRGGMPCKLCGTTLREAKLGQRASVYCPRCQR. Arg-260 (proton donor; for delta-elimination activity) is an active-site residue.

Belongs to the FPG family. In terms of assembly, monomer. The cofactor is Zn(2+).

The enzyme catalyses Hydrolysis of DNA containing ring-opened 7-methylguanine residues, releasing 2,6-diamino-4-hydroxy-5-(N-methyl)formamidopyrimidine.. The catalysed reaction is 2'-deoxyribonucleotide-(2'-deoxyribose 5'-phosphate)-2'-deoxyribonucleotide-DNA = a 3'-end 2'-deoxyribonucleotide-(2,3-dehydro-2,3-deoxyribose 5'-phosphate)-DNA + a 5'-end 5'-phospho-2'-deoxyribonucleoside-DNA + H(+). Functionally, involved in base excision repair of DNA damaged by oxidation or by mutagenic agents. Acts as a DNA glycosylase that recognizes and removes damaged bases. Has a preference for oxidized purines, such as 7,8-dihydro-8-oxoguanine (8-oxoG). Has AP (apurinic/apyrimidinic) lyase activity and introduces nicks in the DNA strand. Cleaves the DNA backbone by beta-delta elimination to generate a single-strand break at the site of the removed base with both 3'- and 5'-phosphates. The sequence is that of Formamidopyrimidine-DNA glycosylase from Pseudomonas putida (strain W619).